The chain runs to 225 residues: Cytidylate kinase (225 aa).

12 to 20 (GPSGAGKGT) lines the ATP pocket.

This sequence belongs to the cytidylate kinase family. Type 1 subfamily.

The protein localises to the cytoplasm. The catalysed reaction is CMP + ATP = CDP + ADP. It carries out the reaction dCMP + ATP = dCDP + ADP. The polypeptide is Cytidylate kinase (Edwardsiella ictaluri (strain 93-146)).